A 385-amino-acid chain; its full sequence is Cytochrome b (385 aa).

A run of 4 helical transmembrane segments spans residues methionine 32–methionine 52, tryptophan 76–alanine 98, valine 113–cysteine 133, and phenylalanine 179–methionine 199. Heme b is bound by residues histidine 82 and histidine 96. Heme b-binding residues include histidine 183 and histidine 197. Residue histidine 202 coordinates a ubiquinone. Helical transmembrane passes span phenylalanine 225–phenylalanine 245, leucine 289–aspartate 309, isoleucine 321–serine 341, and phenylalanine 348–proline 368.

The protein belongs to the cytochrome b family. Fungal cytochrome b-c1 complex contains 10 subunits; 3 respiratory subunits, 2 core proteins and 5 low-molecular weight proteins. Cytochrome b-c1 complex is a homodimer. Heme b serves as cofactor.

It localises to the mitochondrion inner membrane. Component of the ubiquinol-cytochrome c reductase complex (complex III or cytochrome b-c1 complex) that is part of the mitochondrial respiratory chain. The b-c1 complex mediates electron transfer from ubiquinol to cytochrome c. Contributes to the generation of a proton gradient across the mitochondrial membrane that is then used for ATP synthesis. The polypeptide is Cytochrome b (COB) (Monosporozyma servazzii (Yeast)).